Reading from the N-terminus, the 1946-residue chain is Sickle tail protein (1946 aa).

Disordered stretches follow at residues 1–83 (MEES…GMQP) and 113–176 (ERLR…VRSA). Residues 18–36 (DSRQMPQQGRSNLHVTSQE) are compositionally biased toward polar residues. Positions 38–47 (AACRRPRERL) are enriched in basic and acidic residues. Ser169 carries the phosphoserine modification. At Tyr244 the chain carries Phosphotyrosine. 2 disordered regions span residues 305–324 (HPPH…HSLP) and 339–374 (AIPG…RDVK). Residues 308-324 (HVIPNSPPSTPVPHSLP) show a composition bias toward pro residues. The span at 352–367 (SSLPVSRSISPSPSAI) shows a compositional bias: low complexity. Ser357 carries O-linked (GlcNAc) serine glycosylation. Phosphoserine occurs at positions 361 and 365. The residue at position 393 (Tyr393) is a Phosphotyrosine. The interval 455 to 512 (SRKYPDSHLPTLGSKTPPASPHRVGDLRMIDLHPHLNTHGPPHTLQPDRASPSRQSFK) is disordered. Residue Thr470 is modified to Phosphothreonine. Ser474 carries the phosphoserine modification. A compositionally biased stretch (basic and acidic residues) spans 477 to 488 (RVGDLRMIDLHP). Coiled-coil stretches lie at residues 557–581 (RETR…QSAL) and 644–685 (TSLL…ELEI). A Phosphoserine modification is found at Ser809. Disordered regions lie at residues 853-875 (EETA…DVKS) and 891-947 (SPVV…PVNG). Polar residues-rich tracts occupy residues 891 to 909 (SPVV…NPAQ) and 927 to 947 (QEVT…PVNG). Residues 962–990 (SAKNRAVSIEKAEKKWEEKRQNLEHYNGK) are a coiled coil. The segment at 1008 to 1221 (PNLEMPPASS…LRPSGPPKWE (214 aa)) is disordered. A phosphoserine mark is found at Ser1032, Ser1035, Ser1038, and Ser1049. Pro residues predominate over residues 1049–1058 (SPPPPPPPPR). Residues 1151–1162 (NPNSHAEQSRAN) show a composition bias toward polar residues. Residues 1176–1194 (PKEKKNLEFYHEDVRKSDV) show a composition bias toward basic and acidic residues. Ser1466 is subject to Phosphoserine. A coiled-coil region spans residues 1469 to 1495 (FEECDEELERMLTEEKIEEEEEDENED). 3 disordered regions span residues 1482–1567 (EEKI…VDDQ), 1622–1664 (AKRF…RKST), and 1691–1946 (VDTS…KETS). Over residues 1484 to 1495 (KIEEEEEDENED) the composition is skewed to acidic residues. The segment covering 1498 to 1508 (VRTSSQMSCEQ) has biased composition (polar residues). Basic and acidic residues-rich tracts occupy residues 1509–1518 (VDSRSDRMGQ) and 1622–1644 (AKRF…RRQE). The stretch at 1659-1688 (EIRKSTYRTLDSLEQTIKQLENTISEMSPR) forms a coiled coil. Over residues 1739-1759 (KGSSTTPQTSRMPVPMTSKNR) the composition is skewed to polar residues. Ser1741 carries the phosphoserine modification. Residues 1765–1777 (KASKQSKLQDPRQ) show a composition bias toward basic and acidic residues. Residues 1806–1825 (ALSPSSGKSSSLPSASGDSS) show a composition bias toward low complexity. A Phosphoserine modification is found at Ser1843. A compositionally biased stretch (polar residues) spans 1851-1866 (HSASLIPSVSNGSLKF). Low complexity predominate over residues 1890–1899 (AAPTTSSSSS). Phosphoserine is present on residues Ser1899, Ser1902, and Ser1905. Positions 1920-1946 (HTPSLASYKAQNGSSSKATPSTAKETS) are enriched in polar residues.

In terms of assembly, interacts with CPNE4 (via VWFA domain). In terms of tissue distribution, expressed predominantly in the notochord and mesonephros during embryogenesis as well as in other areas such as the epithalamus sulcus, lens vesicle, inner retinal layer, heart, hepatic primordial surface, infundibulum, surface ectoderm, hind gut and limb bud mesenchyme. In adults, expressed in a range of tissues including the nucleus pulposus, corpus callosum, kidney, cardiac muscle, Sertoli cells and hair follicles.

Its subcellular location is the cytoplasm. It localises to the cytoskeleton. It is found in the microtubule organizing center. The protein resides in the centrosome. Functionally, required for normal development of intervertebral disks. The sequence is that of Sickle tail protein from Mus musculus (Mouse).